The primary structure comprises 93 residues: MKQTMDKPKRSFRRHLKPIRRHLKPIRRHLSPIRSGDRIDYKNMSLISRFISEQGKILSGRVNRLTSKQQRLMTNAIKRARILSLLPFLYNEN.

This sequence belongs to the bacterial ribosomal protein bS18 family. In terms of assembly, part of the 30S ribosomal subunit.

Its subcellular location is the plastid. The protein resides in the chloroplast. The polypeptide is Small ribosomal subunit protein bS18c (Pinus koraiensis (Korean pine)).